The following is a 255-amino-acid chain: Thiazole synthase (255 aa).

The active-site Schiff-base intermediate with DXP is Lys96. 1-deoxy-D-xylulose 5-phosphate is bound by residues Gly157, 183–184 (AG), and 205–206 (NT).

This sequence belongs to the ThiG family. In terms of assembly, homotetramer. Forms heterodimers with either ThiH or ThiS.

It is found in the cytoplasm. The catalysed reaction is [ThiS sulfur-carrier protein]-C-terminal-Gly-aminoethanethioate + 2-iminoacetate + 1-deoxy-D-xylulose 5-phosphate = [ThiS sulfur-carrier protein]-C-terminal Gly-Gly + 2-[(2R,5Z)-2-carboxy-4-methylthiazol-5(2H)-ylidene]ethyl phosphate + 2 H2O + H(+). Its pathway is cofactor biosynthesis; thiamine diphosphate biosynthesis. Its function is as follows. Catalyzes the rearrangement of 1-deoxy-D-xylulose 5-phosphate (DXP) to produce the thiazole phosphate moiety of thiamine. Sulfur is provided by the thiocarboxylate moiety of the carrier protein ThiS. In vitro, sulfur can be provided by H(2)S. This is Thiazole synthase from Staphylococcus epidermidis (strain ATCC 35984 / DSM 28319 / BCRC 17069 / CCUG 31568 / BM 3577 / RP62A).